Here is an 80-residue protein sequence, read N- to C-terminus: Defensin-like protein 17 (80 aa).

The N-terminal stretch at 1-29 (MAKSATIITFLFAALVLFAAFEAPTMVEA) is a signal peptide. Q30 carries the pyrrolidone carboxylic acid modification. 4 disulfide bridges follow: C33–C80, C44–C65, C50–C74, and C54–C76.

Belongs to the DEFL family.

It localises to the secreted. In terms of biological role, confers broad-spectrum resistance to pathogens. The chain is Defensin-like protein 17 (PDF1.2C) from Arabidopsis thaliana (Mouse-ear cress).